The chain runs to 395 residues: Digeranylgeranylglycerophospholipid reductase (395 aa).

FAD is bound by residues alanine 15, aspartate 34, cysteine 45, alanine 46, glycine 48, arginine 97, alanine 121, aspartate 276, and glycine 288. The a 2,3-bis-O-(geranylgeranyl)-sn-glycerol 1-phospholipid site is built by arginine 329 and glycine 365.

Belongs to the geranylgeranyl reductase family. DGGGPL reductase subfamily. The cofactor is FAD.

It catalyses the reaction a 2,3-bis-O-phytanyl-sn-glycerol 1-phospholipid + 8 A = a 2,3-bis-O-(geranylgeranyl)-sn-glycerol 1-phospholipid + 8 AH2. The catalysed reaction is 2,3-bis-O-(phytanyl)-sn-glycerol 1-phosphate + 8 A = 2,3-bis-O-(geranylgeranyl)-sn-glycerol 1-phosphate + 8 AH2. It carries out the reaction CDP-2,3-bis-O-(geranylgeranyl)-sn-glycerol + 8 AH2 = CDP-2,3-bis-O-(phytanyl)-sn-glycerol + 8 A. The enzyme catalyses archaetidylserine + 8 AH2 = 2,3-bis-O-phytanyl-sn-glycero-3-phospho-L-serine + 8 A. It functions in the pathway membrane lipid metabolism; glycerophospholipid metabolism. Is involved in the reduction of 2,3-digeranylgeranylglycerophospholipids (unsaturated archaeols) into 2,3-diphytanylglycerophospholipids (saturated archaeols) in the biosynthesis of archaeal membrane lipids. Catalyzes the formation of archaetidic acid (2,3-di-O-phytanyl-sn-glyceryl phosphate) from 2,3-di-O-geranylgeranylglyceryl phosphate (DGGGP) via the hydrogenation of each double bond of the isoprenoid chains. Is also probably able to reduce double bonds of geranyl groups in CDP-2,3-bis-O-(geranylgeranyl)-sn-glycerol and archaetidylserine, thus acting at various stages in the biosynthesis of archaeal membrane lipids. In Thermococcus gammatolerans (strain DSM 15229 / JCM 11827 / EJ3), this protein is Digeranylgeranylglycerophospholipid reductase.